Consider the following 165-residue polypeptide: 6,7-dimethyl-8-ribityllumazine synthase (165 aa).

Residues F22, S56–E58, and A80–I82 contribute to the 5-amino-6-(D-ribitylamino)uracil site. E85–T86 provides a ligand contact to (2S)-2-hydroxy-3-oxobutyl phosphate. The active-site Proton donor is H88. 5-amino-6-(D-ribitylamino)uracil is bound at residue F113. R127 provides a ligand contact to (2S)-2-hydroxy-3-oxobutyl phosphate.

It belongs to the DMRL synthase family.

The catalysed reaction is (2S)-2-hydroxy-3-oxobutyl phosphate + 5-amino-6-(D-ribitylamino)uracil = 6,7-dimethyl-8-(1-D-ribityl)lumazine + phosphate + 2 H2O + H(+). Its pathway is cofactor biosynthesis; riboflavin biosynthesis; riboflavin from 2-hydroxy-3-oxobutyl phosphate and 5-amino-6-(D-ribitylamino)uracil: step 1/2. Catalyzes the formation of 6,7-dimethyl-8-ribityllumazine by condensation of 5-amino-6-(D-ribitylamino)uracil with 3,4-dihydroxy-2-butanone 4-phosphate. This is the penultimate step in the biosynthesis of riboflavin. The sequence is that of 6,7-dimethyl-8-ribityllumazine synthase from Thermotoga sp. (strain RQ2).